We begin with the raw amino-acid sequence, 254 residues long: Low affinity immunoglobulin gamma Fc region receptor III-A (254 aa).

The first 20 residues, 1-20 (MWQLLLPTALLLLVSAGMRA), serve as a signal peptide directing secretion. Topologically, residues 21–206 (EDLPKAVVFL…SSISSFFPPG (186 aa)) are extracellular. Ig-like C2-type domains follow at residues 24-105 (PKAV…LEVH) and 107-189 (GWLL…VNIT). 2 disulfide bridges follow: cysteine 47/cysteine 89 and cysteine 128/cysteine 172. Asparagine 187 carries N-linked (GlcNAc...) asparagine glycosylation. The helical transmembrane segment at 207 to 229 (YQVSFCLVMVLLFAVDTGLYFSV) threads the bilayer. Topologically, residues 230–254 (KKSVPSSTRDWEDHKFKWSKDPQDK) are cytoplasmic.

In terms of assembly, forms a heterooligomeric complex with ITAM-containing signaling subunits, either a homodimer of CD247, a homodimer of FCER1G or a heterodimer of CD247 and FCER1G, to form a functional receptor complex. Interacts (via transmembrane domain) with signaling subunits; this interaction is a prerequisite for receptor complex expression on the cell surface and intracellular signal transduction. Binds the Fc region of antigen-complexed IgG with a preference for IgG1 and IgG3 isotypes. Interacts with CD2; this interaction is involved in NK cell activation and cytotoxicity. Interacts with S100A4; this interaction inhibits PKC-dependent phosphorylation of FCGR3A. In terms of processing, glycosylated. Glycosylation plays an inhibitory role in the interaction with IgG1 and IgG2. Undergoes rapid ectodomain shedding upon NK cell stimulation. The soluble form is produced by a proteolytic cleavage mediated by ADAM17. Repeated stimulation causes receptor shedding, a mechanism that allows for increased NK cell motility and detachment from opsonized target cells while avoiding activation-induced NK cell apoptosis. In terms of tissue distribution, lymphocytes and monocytes.

It localises to the cell membrane. The protein resides in the secreted. In terms of biological role, receptor for the invariable Fc fragment of immunoglobulin gamma (IgG). Optimally activated upon binding of clustered antigen-IgG complexes displayed on cell surfaces, triggers lysis of antibody-coated cells, a process known as antibody-dependent cellular cytotoxicity (ADCC). Does not bind free monomeric IgG, thus avoiding inappropriate effector cell activation in the absence of antigenic trigger. Mediates IgG effector functions on natural killer (NK) cells. Binds antigen-IgG complexes generated upon infection and triggers NK cell-dependent cytokine production and degranulation to limit viral load and propagation. Involved in the generation of memory-like adaptive NK cells capable to produce high amounts of IFNG and to efficiently eliminate virus-infected cells via ADCC. Regulates NK cell survival and proliferation, in particular by preventing NK cell progenitor apoptosis. Fc-binding subunit that associates with CD247 and/or FCER1G adapters to form functional signaling complexes. Following the engagement of antigen-IgG complexes, triggers phosphorylation of immunoreceptor tyrosine-based activation motif (ITAM)-containing adapters with subsequent activation of phosphatidylinositol 3-kinase signaling and sustained elevation of intracellular calcium that ultimately drive NK cell activation. The ITAM-dependent signaling coupled to receptor phosphorylation by PKC mediates robust intracellular calcium flux that leads to production of pro-inflammatory cytokines, whereas in the absence of receptor phosphorylation it mainly activates phosphatidylinositol 3-kinase signaling leading to cell degranulation. Costimulates NK cells and trigger lysis of target cells independently of IgG binding. Mediates the antitumor activities of therapeutic antibodies. Upon ligation on monocytes triggers TNFA-dependent ADCC of IgG-coated tumor cells. Mediates enhanced ADCC in response to afucosylated IgGs. The protein is Low affinity immunoglobulin gamma Fc region receptor III-A of Macaca mulatta (Rhesus macaque).